Here is a 414-residue protein sequence, read N- to C-terminus: Probable serine/threonine-protein kinase PBL26 (414 aa).

Residue Cys-3 is the site of S-palmitoyl cysteine attachment. Positions 17–41 are enriched in basic and acidic residues; it reads RDSDNSYRRNGEVTGRDNNKTHPEN. Residues 17–55 form a disordered region; that stretch reads RDSDNSYRRNGEVTGRDNNKTHPENPKTVNEQNKNNDED. Residues 79–356 form the Protein kinase domain; it reads FRQECLIGEG…SDVVTALGFL (278 aa). ATP contacts are provided by residues 85–93 and Lys-108; that span reads IGEGGFGRV. Position 153 is a phosphotyrosine (Tyr-153). Catalysis depends on Asp-206, which acts as the Proton acceptor. A Phosphoserine modification is found at Ser-240. Thr-246 bears the Phosphothreonine mark. A Phosphotyrosine modification is found at Tyr-254. Positions 364–394 are disordered; it reads ISVPHYDDPPQPSDETSVEDSVAAEERERAV.

It belongs to the protein kinase superfamily. Ser/Thr protein kinase family. Palmitoylation at Cys-3 and Cys-6 are required for plasma membrane location.

It is found in the cell membrane. The enzyme catalyses L-seryl-[protein] + ATP = O-phospho-L-seryl-[protein] + ADP + H(+). The catalysed reaction is L-threonyl-[protein] + ATP = O-phospho-L-threonyl-[protein] + ADP + H(+). Its function is as follows. May be involved in plant defense signaling. The protein is Probable serine/threonine-protein kinase PBL26 of Arabidopsis thaliana (Mouse-ear cress).